A 131-amino-acid polypeptide reads, in one-letter code: Phosphoribosyl-AMP cyclohydrolase (131 aa).

Residue D80 coordinates Mg(2+). C81 provides a ligand contact to Zn(2+). Residues D82 and D84 each contribute to the Mg(2+) site. 2 residues coordinate Zn(2+): C98 and C105.

Belongs to the PRA-CH family. In terms of assembly, homodimer. Mg(2+) serves as cofactor. The cofactor is Zn(2+).

It is found in the cytoplasm. The catalysed reaction is 1-(5-phospho-beta-D-ribosyl)-5'-AMP + H2O = 1-(5-phospho-beta-D-ribosyl)-5-[(5-phospho-beta-D-ribosylamino)methylideneamino]imidazole-4-carboxamide. The protein operates within amino-acid biosynthesis; L-histidine biosynthesis; L-histidine from 5-phospho-alpha-D-ribose 1-diphosphate: step 3/9. Functionally, catalyzes the hydrolysis of the adenine ring of phosphoribosyl-AMP. The sequence is that of Phosphoribosyl-AMP cyclohydrolase from Azoarcus sp. (strain BH72).